Here is a 403-residue protein sequence, read N- to C-terminus: Phosphopentomutase (403 aa).

Mn(2+)-binding residues include D13, D298, H303, D339, H340, and H351.

It belongs to the phosphopentomutase family. Mn(2+) serves as cofactor.

The protein localises to the cytoplasm. It carries out the reaction 2-deoxy-alpha-D-ribose 1-phosphate = 2-deoxy-D-ribose 5-phosphate. The catalysed reaction is alpha-D-ribose 1-phosphate = D-ribose 5-phosphate. The protein operates within carbohydrate degradation; 2-deoxy-D-ribose 1-phosphate degradation; D-glyceraldehyde 3-phosphate and acetaldehyde from 2-deoxy-alpha-D-ribose 1-phosphate: step 1/2. Isomerase that catalyzes the conversion of deoxy-ribose 1-phosphate (dRib-1-P) and ribose 1-phosphate (Rib-1-P) to deoxy-ribose 5-phosphate (dRib-5-P) and ribose 5-phosphate (Rib-5-P), respectively. The sequence is that of Phosphopentomutase from Streptococcus pyogenes serotype M18 (strain MGAS8232).